We begin with the raw amino-acid sequence, 515 residues long: Maturase K (515 aa).

It belongs to the intron maturase 2 family. MatK subfamily.

The protein localises to the plastid. It localises to the chloroplast. Its function is as follows. Usually encoded in the trnK tRNA gene intron. Probably assists in splicing its own and other chloroplast group II introns. The protein is Maturase K of Picea engelmannii (Engelmann's spruce).